Consider the following 149-residue polypeptide: D-aminoacyl-tRNA deacylase (149 aa).

The Gly-cisPro motif, important for rejection of L-amino acids signature appears at 137–138; the sequence is GP.

Belongs to the DTD family. As to quaternary structure, homodimer.

The protein localises to the cytoplasm. The catalysed reaction is glycyl-tRNA(Ala) + H2O = tRNA(Ala) + glycine + H(+). The enzyme catalyses a D-aminoacyl-tRNA + H2O = a tRNA + a D-alpha-amino acid + H(+). In terms of biological role, an aminoacyl-tRNA editing enzyme that deacylates mischarged D-aminoacyl-tRNAs. Also deacylates mischarged glycyl-tRNA(Ala), protecting cells against glycine mischarging by AlaRS. Acts via tRNA-based rather than protein-based catalysis; rejects L-amino acids rather than detecting D-amino acids in the active site. By recycling D-aminoacyl-tRNA to D-amino acids and free tRNA molecules, this enzyme counteracts the toxicity associated with the formation of D-aminoacyl-tRNA entities in vivo and helps enforce protein L-homochirality. This chain is D-aminoacyl-tRNA deacylase, found in Clostridium acetobutylicum (strain ATCC 824 / DSM 792 / JCM 1419 / IAM 19013 / LMG 5710 / NBRC 13948 / NRRL B-527 / VKM B-1787 / 2291 / W).